A 300-amino-acid polypeptide reads, in one-letter code: Acetaldehyde dehydrogenase (300 aa).

11 to 14 (SGNI) provides a ligand contact to NAD(+). The active-site Acyl-thioester intermediate is the cysteine 129. NAD(+) contacts are provided by residues 160-168 (SVGPGTRQN) and asparagine 271.

The protein belongs to the acetaldehyde dehydrogenase family.

The enzyme catalyses acetaldehyde + NAD(+) + CoA = acetyl-CoA + NADH + H(+). The chain is Acetaldehyde dehydrogenase (mhpF) from Pseudoalteromonas translucida (strain TAC 125).